The primary structure comprises 605 residues: Probable potassium transport system protein Kup 2 (605 aa).

12 consecutive transmembrane segments (helical) span residues 17–37 (GLVF…IMTL), 45–65 (VLGI…VEYA), 96–116 (MAFA…DGVI), 139–159 (AQGG…IFQF), 169–189 (FGPI…VSII), 211–231 (GLAG…GEAL), 246–266 (AWYF…AFIL), 286–306 (LYIP…QALI), 338–358 (IYIG…MILF), 367–387 (AYGL…TMIF), 394–414 (WKVP…TANL), and 417–437 (LPHG…IMVI).

This sequence belongs to the HAK/KUP transporter (TC 2.A.72) family.

It localises to the cell inner membrane. It carries out the reaction K(+)(in) + H(+)(in) = K(+)(out) + H(+)(out). In terms of biological role, transport of potassium into the cell. Likely operates as a K(+):H(+) symporter. The chain is Probable potassium transport system protein Kup 2 from Geobacter sulfurreducens (strain ATCC 51573 / DSM 12127 / PCA).